The following is a 124-amino-acid chain: Seripauperin-15 (124 aa).

Positions 1-20 (MVKLTSIAAGVAAIAAGVAA) are cleaved as a signal peptide.

This sequence belongs to the SRP1/TIP1 family. Seripauperin subfamily.

The protein is Seripauperin-15 (PAU15) of Saccharomyces cerevisiae (strain ATCC 204508 / S288c) (Baker's yeast).